The sequence spans 155 residues: Small ribosomal subunit protein uS7c (155 aa).

This sequence belongs to the universal ribosomal protein uS7 family. Part of the 30S ribosomal subunit.

It localises to the plastid. The protein resides in the chloroplast. Functionally, one of the primary rRNA binding proteins, it binds directly to 16S rRNA where it nucleates assembly of the head domain of the 30S subunit. The chain is Small ribosomal subunit protein uS7c (rps7) from Saruma henryi (Upright wild ginger).